Reading from the N-terminus, the 401-residue chain is Alternative oxidase, mitochondrial (401 aa).

Residues 53-81 are disordered; the sequence is KRASLSLQPSVREAEKSQGPVVGSEGRGV. The helical transmembrane segment at 184–204 threads the bilayer; the sequence is LFRIILLESIAGVPGMVGGTL. Fe cation is bound by residues E191, E230, and H233. Residues 249–269 traverse the membrane as a helical segment; that stretch reads ALVLAAQGVFYNAFFLTYLIS. Fe cation is bound by residues E281, E282, E335, and H338.

It belongs to the alternative oxidase family. The cofactor is Fe cation.

The protein localises to the mitochondrion inner membrane. Functionally, catalyzes cyanide-resistant oxygen consumption. May increase respiration when the cytochrome respiratory pathway is restricted, or in response to low temperatures. The protein is Alternative oxidase, mitochondrial (AOX1) of Cryptococcus neoformans var. grubii serotype A (strain H99 / ATCC 208821 / CBS 10515 / FGSC 9487) (Filobasidiella neoformans var. grubii).